We begin with the raw amino-acid sequence, 178 residues long: Phosphopantetheine adenylyltransferase (178 aa).

Substrate is bound at residue Thr-17. ATP contacts are provided by residues 17–18 (TF) and His-25. Positions 49, 86, and 100 each coordinate substrate. Residues 101-103 (GLR), Glu-111, and 136-142 (LQPVASR) each bind ATP.

This sequence belongs to the bacterial CoaD family. As to quaternary structure, homohexamer. The cofactor is Mg(2+).

The protein localises to the cytoplasm. It carries out the reaction (R)-4'-phosphopantetheine + ATP + H(+) = 3'-dephospho-CoA + diphosphate. Its pathway is cofactor biosynthesis; coenzyme A biosynthesis; CoA from (R)-pantothenate: step 4/5. In terms of biological role, reversibly transfers an adenylyl group from ATP to 4'-phosphopantetheine, yielding dephospho-CoA (dPCoA) and pyrophosphate. In Zymomonas mobilis subsp. mobilis (strain ATCC 31821 / ZM4 / CP4), this protein is Phosphopantetheine adenylyltransferase.